Consider the following 42-residue polypeptide: Photosystem I reaction center subunit IX (42 aa).

Residues 7–27 (YLSTAPVLAALSLGFLAGLLI) form a helical membrane-spanning segment.

This sequence belongs to the PsaJ family.

It localises to the plastid. It is found in the chloroplast thylakoid membrane. Its function is as follows. May help in the organization of the PsaE and PsaF subunits. In Cryptomeria japonica (Japanese cedar), this protein is Photosystem I reaction center subunit IX.